A 778-amino-acid chain; its full sequence is Endonuclease MutS2 (778 aa).

Residue 332 to 339 (GPNTGGKT) participates in ATP binding. The Smr domain occupies 703 to 778 (IDLRGKMVDE…GLGCTVVTLK (76 aa)).

It belongs to the DNA mismatch repair MutS family. MutS2 subfamily. In terms of assembly, homodimer. Binds to stalled ribosomes, contacting rRNA.

Its function is as follows. Endonuclease that is involved in the suppression of homologous recombination and thus may have a key role in the control of bacterial genetic diversity. Acts as a ribosome collision sensor, splitting the ribosome into its 2 subunits. Detects stalled/collided 70S ribosomes which it binds and splits by an ATP-hydrolysis driven conformational change. Acts upstream of the ribosome quality control system (RQC), a ribosome-associated complex that mediates the extraction of incompletely synthesized nascent chains from stalled ribosomes and their subsequent degradation. Probably generates substrates for RQC. In Fusobacterium nucleatum subsp. nucleatum (strain ATCC 25586 / DSM 15643 / BCRC 10681 / CIP 101130 / JCM 8532 / KCTC 2640 / LMG 13131 / VPI 4355), this protein is Endonuclease MutS2.